We begin with the raw amino-acid sequence, 443 residues long: UDP-N-acetylmuramate--L-alanine ligase (443 aa).

110–116 contributes to the ATP binding site; that stretch reads GAHGKTS.

It belongs to the MurCDEF family.

The protein resides in the cytoplasm. It catalyses the reaction UDP-N-acetyl-alpha-D-muramate + L-alanine + ATP = UDP-N-acetyl-alpha-D-muramoyl-L-alanine + ADP + phosphate + H(+). Its pathway is cell wall biogenesis; peptidoglycan biosynthesis. Functionally, cell wall formation. The chain is UDP-N-acetylmuramate--L-alanine ligase from Streptococcus equi subsp. zooepidemicus (strain MGCS10565).